We begin with the raw amino-acid sequence, 294 residues long: 2-dehydro-3-deoxy-phosphogluconate/2-dehydro-3-deoxy-6-phosphogalactonate aldolase (294 aa).

Residues 43 to 44 (TT), 130 to 132 (YNY), and 155 to 157 (KDT) contribute to the substrate site. Catalysis depends on Lys155, which acts as the Schiff-base intermediate with substrate.

Belongs to the DapA family. KDPG aldolase subfamily. In terms of assembly, homotetramer; dimer of dimers.

The catalysed reaction is 2-dehydro-3-deoxy-6-phospho-D-gluconate = D-glyceraldehyde 3-phosphate + pyruvate. The enzyme catalyses 2-dehydro-3-deoxy-6-phospho-D-galactonate = D-glyceraldehyde 3-phosphate + pyruvate. It functions in the pathway carbohydrate acid metabolism; 2-dehydro-3-deoxy-D-gluconate degradation; D-glyceraldehyde 3-phosphate and pyruvate from 2-dehydro-3-deoxy-D-gluconate: step 2/2. Involved in the degradation of glucose and galactose via the Entner-Doudoroff pathway. Catalyzes the reversible cleavage of 2-keto-3-deoxy-6-phosphogluconate (KDPG) and 2-keto-3-deoxygluconate (KDG) forming pyruvate and glyceraldehyde 3-phosphate or glyceraldehyde, respectively. It is also able to catalyze the reversible cleavage of 2-keto-3-deoxy-6-phosphogalactonate (KDPGal) and 2-keto-3-deoxygalactonate (KDGal). It is equally active with both D- and L-glyceraldehyde. The sequence is that of 2-dehydro-3-deoxy-phosphogluconate/2-dehydro-3-deoxy-6-phosphogalactonate aldolase from Saccharolobus solfataricus (Sulfolobus solfataricus).